Reading from the N-terminus, the 456-residue chain is Chordin-like protein 1 (456 aa).

The signal sequence occupies residues 1-28; the sequence is MRRKWRSEDFHFVFFGVLCLLLIDRGKL. VWFC domains are found at residues 36–101, 115–181, and 262–327; these read TYCV…PRCP, KSCE…PVCR, and RVCV…KVCP. A glycan (N-linked (GlcNAc...) asparagine) is linked at asparagine 120. Positions 181-183 match the Cell attachment site motif; that stretch reads RGD. Residue asparagine 295 is glycosylated (N-linked (GlcNAc...) asparagine).

Mainly expressed in the ventral retina.

The protein localises to the secreted. Seems to antagonize the function of BMP4 by binding to it and preventing its interaction with receptors. This chain is Chordin-like protein 1 (CHRDL1), found in Gallus gallus (Chicken).